We begin with the raw amino-acid sequence, 204 residues long: Endothelin-3 (204 aa).

The signal sequence occupies residues methionine 1 to alanine 17. Positions glycine 18–alanine 71 are disordered. The propeptide occupies glycine 18 to alanine 80. Disulfide bonds link cysteine 83/cysteine 97 and cysteine 85/cysteine 93. Positions isoleucine 104–leucine 204 are excised as a propeptide. Residues leucine 115–glycine 140 are disordered. Residues serine 127–glycine 140 are compositionally biased toward low complexity. The interval cysteine 144 to cysteine 158 is endothelin-like. The interval glycine 166–leucine 204 is disordered.

This sequence belongs to the endothelin/sarafotoxin family.

The protein localises to the secreted. In terms of biological role, endothelins are endothelium-derived vasoconstrictor peptides. This Sus scrofa (Pig) protein is Endothelin-3 (EDN3).